A 212-amino-acid polypeptide reads, in one-letter code: Cytidylate kinase (212 aa).

An ATP-binding site is contributed by 7-15; sequence GPAASGKGT.

This sequence belongs to the cytidylate kinase family. Type 1 subfamily.

The protein localises to the cytoplasm. It carries out the reaction CMP + ATP = CDP + ADP. It catalyses the reaction dCMP + ATP = dCDP + ADP. This Rhodopseudomonas palustris (strain TIE-1) protein is Cytidylate kinase.